A 473-amino-acid chain; its full sequence is Bifunctional protein HldE (473 aa).

A ribokinase region spans residues 1-318 (MKLSMPRFDQ…RAIQREEGSE (318 aa)). 194-197 (NLSE) is an ATP binding site. Residue aspartate 263 is part of the active site. Residues 343–473 (FTNGCFDILH…TAIVEKIRKN (131 aa)) form a cytidylyltransferase region.

It in the N-terminal section; belongs to the carbohydrate kinase PfkB family. The protein in the C-terminal section; belongs to the cytidylyltransferase family. In terms of assembly, homodimer.

The enzyme catalyses D-glycero-beta-D-manno-heptose 7-phosphate + ATP = D-glycero-beta-D-manno-heptose 1,7-bisphosphate + ADP + H(+). It catalyses the reaction D-glycero-beta-D-manno-heptose 1-phosphate + ATP + H(+) = ADP-D-glycero-beta-D-manno-heptose + diphosphate. The protein operates within nucleotide-sugar biosynthesis; ADP-L-glycero-beta-D-manno-heptose biosynthesis; ADP-L-glycero-beta-D-manno-heptose from D-glycero-beta-D-manno-heptose 7-phosphate: step 1/4. Its pathway is nucleotide-sugar biosynthesis; ADP-L-glycero-beta-D-manno-heptose biosynthesis; ADP-L-glycero-beta-D-manno-heptose from D-glycero-beta-D-manno-heptose 7-phosphate: step 3/4. Catalyzes the phosphorylation of D-glycero-D-manno-heptose 7-phosphate at the C-1 position to selectively form D-glycero-beta-D-manno-heptose-1,7-bisphosphate. Functionally, catalyzes the ADP transfer from ATP to D-glycero-beta-D-manno-heptose 1-phosphate, yielding ADP-D-glycero-beta-D-manno-heptose. This Pseudomonas putida (strain GB-1) protein is Bifunctional protein HldE.